Reading from the N-terminus, the 153-residue chain is Endoribonuclease YbeY (153 aa).

Zn(2+)-binding residues include His-112, His-116, and His-122.

Belongs to the endoribonuclease YbeY family. Zn(2+) serves as cofactor.

The protein localises to the cytoplasm. Its function is as follows. Single strand-specific metallo-endoribonuclease involved in late-stage 70S ribosome quality control and in maturation of the 3' terminus of the 16S rRNA. This is Endoribonuclease YbeY from Persephonella marina (strain DSM 14350 / EX-H1).